A 257-amino-acid polypeptide reads, in one-letter code: Large ribosomal subunit protein uL2 (257 aa).

A disordered region spans residues 207–230 (VEHPFGGGNHQHIGKPSTIRRDAP).

This sequence belongs to the universal ribosomal protein uL2 family. As to quaternary structure, component of the large ribosomal subunit.

The protein localises to the cytoplasm. Its function is as follows. Component of the large ribosomal subunit. The ribosome is a large ribonucleoprotein complex responsible for the synthesis of proteins in the cell. The sequence is that of Large ribosomal subunit protein uL2 (rpl8) from Danio rerio (Zebrafish).